An 872-amino-acid polypeptide reads, in one-letter code: DNA mismatch repair protein MutS (872 aa).

632-639 (GPNMGGKS) is an ATP binding site.

The protein belongs to the DNA mismatch repair MutS family.

This protein is involved in the repair of mismatches in DNA. It is possible that it carries out the mismatch recognition step. This protein has a weak ATPase activity. This Colwellia psychrerythraea (strain 34H / ATCC BAA-681) (Vibrio psychroerythus) protein is DNA mismatch repair protein MutS.